Here is a 1356-residue protein sequence, read N- to C-terminus: DNA-directed RNA polymerase subunit beta (1356 aa).

This sequence belongs to the RNA polymerase beta chain family. In terms of assembly, the RNAP catalytic core consists of 2 alpha, 1 beta, 1 beta' and 1 omega subunit. When a sigma factor is associated with the core the holoenzyme is formed, which can initiate transcription.

It catalyses the reaction RNA(n) + a ribonucleoside 5'-triphosphate = RNA(n+1) + diphosphate. DNA-dependent RNA polymerase catalyzes the transcription of DNA into RNA using the four ribonucleoside triphosphates as substrates. This is DNA-directed RNA polymerase subunit beta from Stutzerimonas stutzeri (strain A1501) (Pseudomonas stutzeri).